A 711-amino-acid chain; its full sequence is Polyribonucleotide nucleotidyltransferase (711 aa).

Asp490 and Asp496 together coordinate Mg(2+). The KH domain maps to 556–615 (PRIETMQVPTDKIREVIGSGGKVIREIVEVSGAKVDINDDGVIKIASANGEAIQKAYDMI). Residues 625-693 (GAVYTGKVVK…DRGKVRLSMK (69 aa)) form the S1 motif domain.

Belongs to the polyribonucleotide nucleotidyltransferase family. Mg(2+) serves as cofactor.

Its subcellular location is the cytoplasm. It carries out the reaction RNA(n+1) + phosphate = RNA(n) + a ribonucleoside 5'-diphosphate. In terms of biological role, involved in mRNA degradation. Catalyzes the phosphorolysis of single-stranded polyribonucleotides processively in the 3'- to 5'-direction. This is Polyribonucleotide nucleotidyltransferase from Ruegeria sp. (strain TM1040) (Silicibacter sp.).